A 446-amino-acid chain; its full sequence is Exodeoxyribonuclease 7 large subunit (446 aa).

This sequence belongs to the XseA family. In terms of assembly, heterooligomer composed of large and small subunits.

It localises to the cytoplasm. It carries out the reaction Exonucleolytic cleavage in either 5'- to 3'- or 3'- to 5'-direction to yield nucleoside 5'-phosphates.. In terms of biological role, bidirectionally degrades single-stranded DNA into large acid-insoluble oligonucleotides, which are then degraded further into small acid-soluble oligonucleotides. The chain is Exodeoxyribonuclease 7 large subunit from Streptococcus pneumoniae serotype 4 (strain ATCC BAA-334 / TIGR4).